Consider the following 295-residue polypeptide: 15-cis-phytoene synthase (295 aa).

It belongs to the phytoene/squalene synthase family. It depends on ATP as a cofactor. The cofactor is Mn(2+).

It catalyses the reaction 2 (2E,6E,10E)-geranylgeranyl diphosphate = 15-cis-phytoene + 2 diphosphate. The protein operates within carotenoid biosynthesis; phytoene biosynthesis. With respect to regulation, significant inhibition is seen at GGPP concentrations above 100 uM. Functionally, involved in the biosynthesis of carotenoids. Catalyzes stereoselectively the condensation of two molecules of geranylgeranyl diphosphate (GGPP) to give prephytoene diphosphate (PPPP) and the subsequent rearrangement of the cyclopropylcarbinyl intermediate to yield 15-cis-phytoene. The chain is 15-cis-phytoene synthase (crtB) from Enterobacter agglomerans (Erwinia herbicola).